A 398-amino-acid chain; its full sequence is Mu-type opioid receptor (398 aa).

Over 1 to 66 (MDSSTGPGNT…CPQTGSPSMV (66 aa)) the chain is Extracellular. N-linked (GlcNAc...) asparagine glycans are attached at residues asparagine 9, asparagine 31, asparagine 38, asparagine 46, and asparagine 53. Residues 67–91 (TAITIMALYSIVCVVGLFGNFLVMY) traverse the membrane as a helical segment. The Cytoplasmic portion of the chain corresponds to 92 to 104 (VIVRYTKMKTATN). A helical transmembrane segment spans residues 105-129 (IYIFNLALADALATSTLPFQSVNYL). Residues 130–140 (MGTWPFGTILC) lie on the Extracellular side of the membrane. A disulfide bridge connects residues cysteine 140 and cysteine 217. A helical transmembrane segment spans residues 141 to 163 (KIVISIDYYNMFTSIFTLCTMSV). At 164–183 (DRYIAVCHPVKALDFRTPRN) the chain is on the cytoplasmic side. The residue at position 166 (tyrosine 166) is a Phosphotyrosine. The chain crosses the membrane as a helical span at residues 184–205 (AKIVNVCNWILSSAIGLPVMFM). At 206-228 (ATTKYRQGSIDCTLTFSHPTWYW) the chain is on the extracellular side. Residues 229-253 (ENLLKICVFIFAFIMPVLIITVCYG) form a helical membrane-spanning segment. Over 254-277 (LMILRLKSVRMLSGSKEKDRNLRR) the chain is Cytoplasmic. The helical transmembrane segment at 278 to 304 (ITRMVLVVVAVFIVCWTPIHIYVIIKA) threads the bilayer. Residues 305–312 (LITIPETT) are Extracellular-facing. The chain crosses the membrane as a helical span at residues 313-336 (FQTVSWHFCIALGYTNSCLNPVLY). Positions 332-336 (NPVLY) match the NPxxY; plays a role in stabilizing the activated conformation of the receptor motif. At 337 to 398 (AFLDENFKRC…NLEAETAPLP (62 aa)) the chain is on the cytoplasmic side. Residue cysteine 351 is the site of S-palmitoyl cysteine attachment. A disordered region spans residues 361 to 385 (QNSTRVRQNTREHPSTANTVDRTNH). Phosphoserine is present on serine 363. Threonine 370 carries the phosphothreonine modification. Serine 375 is modified (phosphoserine). Position 394 is a phosphothreonine (threonine 394).

It belongs to the G-protein coupled receptor 1 family. In terms of assembly, forms homooligomers and heterooligomers with other GPCRs, such as OPRD1, OPRK1, OPRL1, NPFFR2, ADRA2A, SSTR2, CNR1 and CCR5 (probably in dimeric forms). Interacts with heterotrimeric G proteins; interaction with a heterotrimeric complex containing GNAI1, GNB1 and GNG2 stabilizes the active conformation of the receptor and increases its affinity for endomorphin-2, the synthetic opioid peptide DAMGO and for morphinan agonists. Interacts with PPL; the interaction disrupts agonist-mediated G-protein activation. Interacts (via C-terminus) with DNAJB4 (via C-terminus). Interacts with calmodulin; the interaction inhibits the constitutive activity of OPRM1; it abolishes basal and attenuates agonist-stimulated G-protein coupling. Interacts with FLNA, PLD2, RANBP9 and WLS and GPM6A. Interacts with RTP4. Interacts with SYP and GNAS. Interacts with RGS9, RGS17, RGS20, RGS4, PPP1R9B and HINT1. Phosphorylated. Differentially phosphorylated in basal and agonist-induced conditions. Agonist-mediated phosphorylation modulates receptor internalization. Phosphorylated by GRK2 in a agonist-dependent manner. Phosphorylation at Tyr-166 requires receptor activation, is dependent on non-receptor protein tyrosine kinase Src and results in a decrease in agonist efficacy by reducing G-protein coupling efficiency. Phosphorylated on tyrosine residues; the phosphorylation is involved in agonist-induced G-protein-independent receptor down-regulation. Phosphorylation at Ser-375 is involved in G-protein-dependent but not beta-arrestin-dependent activation of the ERK pathway. In terms of processing, ubiquitinated. A basal ubiquitination seems not to be related to degradation. Ubiquitination is increased upon formation of OPRM1:OPRD1 oligomers leading to proteasomal degradation; the ubiquitination is diminished by RTP4. In terms of tissue distribution, brain. Is expressed in the cerebral cortex, caudate putamen, nucleus accumbens, septal nuclei, thalamus, hippocampus, and habenula. Not detected in cerebellum.

It is found in the cell membrane. It localises to the cell projection. The protein resides in the axon. The protein localises to the perikaryon. Its subcellular location is the dendrite. It is found in the endosome. Its function is as follows. Receptor for endogenous opioids such as beta-endorphin and endomorphin. Receptor for natural and synthetic opioids including morphine, heroin, DAMGO, fentanyl, etorphine, buprenorphin and methadone. Also activated by enkephalin peptides, such as Met-enkephalin or Met-enkephalin-Arg-Phe, with higher affinity for Met-enkephalin-Arg-Phe. Agonist binding to the receptor induces coupling to an inactive GDP-bound heterotrimeric G-protein complex and subsequent exchange of GDP for GTP in the G-protein alpha subunit leading to dissociation of the G-protein complex with the free GTP-bound G-protein alpha and the G-protein beta-gamma dimer activating downstream cellular effectors. The agonist- and cell type-specific activity is predominantly coupled to pertussis toxin-sensitive G(i) and G(o) G alpha proteins, GNAI1, GNAI2, GNAI3 and GNAO1 isoforms Alpha-1 and Alpha-2, and to a lesser extent to pertussis toxin-insensitive G alpha proteins GNAZ and GNA15. They mediate an array of downstream cellular responses, including inhibition of adenylate cyclase activity and both N-type and L-type calcium channels, activation of inward rectifying potassium channels, mitogen-activated protein kinase (MAPK), phospholipase C (PLC), phosphoinositide/protein kinase (PKC), phosphoinositide 3-kinase (PI3K) and regulation of NF-kappa-B. Also couples to adenylate cyclase stimulatory G alpha proteins. The selective temporal coupling to G-proteins and subsequent signaling can be regulated by RGSZ proteins, such as RGS9, RGS17 and RGS4. Phosphorylation by members of the GPRK subfamily of Ser/Thr protein kinases and association with beta-arrestins is involved in short-term receptor desensitization. Beta-arrestins associate with the GPRK-phosphorylated receptor and uncouple it from the G-protein thus terminating signal transduction. The phosphorylated receptor is internalized through endocytosis via clathrin-coated pits which involves beta-arrestins. The activation of the ERK pathway occurs either in a G-protein-dependent or a beta-arrestin-dependent manner and is regulated by agonist-specific receptor phosphorylation. Acts as a class A G-protein coupled receptor (GPCR) which dissociates from beta-arrestin at or near the plasma membrane and undergoes rapid recycling. Receptor down-regulation pathways are varying with the agonist and occur dependent or independent of G-protein coupling. Endogenous ligands induce rapid desensitization, endocytosis and recycling. Heterooligomerization with other GPCRs can modulate agonist binding, signaling and trafficking properties. This chain is Mu-type opioid receptor (Oprm1), found in Rattus norvegicus (Rat).